Consider the following 299-residue polypeptide: Ent-kaurene oxidase-like protein 1 (299 aa).

The helical transmembrane segment at 16-36 (AVVGVFVAAAVVGGFVAAVAL) threads the bilayer.

The protein belongs to the cytochrome P450 family. In terms of tissue distribution, expressed in roots and panicles.

The protein resides in the membrane. This is Ent-kaurene oxidase-like protein 1 from Oryza sativa subsp. japonica (Rice).